We begin with the raw amino-acid sequence, 866 residues long: Protein mono-ADP-ribosyltransferase PARP9 (866 aa).

Phosphoserine is present on S42. Macro domains follow at residues 109-298 (QRVF…ESIL) and 313-492 (ASTM…TKRS). In terms of domain architecture, PARP catalytic spans 635–853 (TNQQEKLDKM…YSSGPGMVSS (219 aa)).

The protein belongs to the ARTD/PARP family. Forms a stable complex with E3 ligase DTX3L; the interaction is required for PARP9 mediated ADP-ribosylation of ubiquitin. Interacts (via PARP catalytic domain) with DTX3L (via N-terminus). Forms a complex with STAT1 and DTX3L independently of IFNB1 or IFNG-mediated STAT1 'Tyr-701' phosphorylation. Forms a complex with STAT1, DTX3L and histone H2B H2BC9/H2BJ; the interaction is likely to induce H2BC9/H2BJ ubiquitination. Interacts (via N-terminus) with STAT1. Interacts with PARP14 in IFNG-stimulated macrophages; the interaction prevents PARP14-mediated STAT1 and STAT6 ADP-riboslylation. Interacts with PARP1 (when poly-ADP-ribosylated). Post-translationally, ADP-ribosylated by PARP14. As to expression, highly expressed in the thymus and intestine. Expressed in macrophages.

The protein resides in the cytoplasm. It localises to the cytosol. It is found in the nucleus. The enzyme catalyses [protein]-C-terminal glycine + NAD(+) = [protein]-C-terminal O-(ADP-D-ribosyl)-glycine + nicotinamide. With respect to regulation, binding to poly(ADP-ribose) does not affect its activity. Functionally, ADP-ribosyltransferase which, in association with E3 ligase DTX3L, plays a role in DNA damage repair and in immune responses including interferon-mediated antiviral defenses. Within the complex, enhances DTX3L E3 ligase activity which is further enhanced by PARP9 binding to poly(ADP-ribose). In addition, positively regulates DTXL3 protein levels. In association with DTX3L and in presence of E1 and E2 enzymes, mediates NAD(+)-dependent mono-ADP-ribosylation of ubiquitin which prevents ubiquitin conjugation to substrates such as histones. During DNA repair, PARP1 recruits PARP9/BAL1-DTX3L complex to DNA damage sites via PARP9 binding to ribosylated PARP1. Subsequent PARP1-dependent PARP9/BAL1-DTX3L-mediated ubiquitination promotes the rapid and specific recruitment of 53BP1/TP53BP1, UIMC1/RAP80, and BRCA1 to DNA damage sites. In response to DNA damage, PARP9-DTX3L complex is required for efficient non-homologous end joining (NHEJ) but the complex function is restrained by PARP9 activity. Dispensable for B-cell receptor (BCR) assembly through V(D)J recombination and class switch recombination (CSR). In macrophages, positively regulates pro-inflammatory cytokines production in response to IFNG stimulation by suppressing PARP14-mediated STAT1 ADP-ribosylation and thus promoting STAT1 phosphorylation. Also suppresses PARP14-mediated STAT6 ADP-ribosylation. The chain is Protein mono-ADP-ribosyltransferase PARP9 (Parp9) from Mus musculus (Mouse).